Consider the following 388-residue polypeptide: Quinolone resistance protein NorA (388 aa).

12 consecutive transmembrane segments (helical) span residues 5–25 (IFVLYFNIFLIFLGIGLVIPV), 42–62 (LLVAAFALSQMIISPFGGTLA), 69–89 (LIICIGLILFSVSEFMFAVGH), 99–119 (VIGGMSAGMVMPGVTGLIADI), 129–149 (FGYMSAIINSGFILGPGIGGF), 157–177 (MPFYFAGALGILAFIMSIVLI), 201–221 (WKVFITPVILTLVLSFGLSAF), 239–259 (DISIAITGGGIFGALFQIYFF), 269–289 (LTFIAWSLLYSVVVLILLVFA), 293–313 (WSIMLISFVVFIGFDMIRPAI), 331–351 (LNSTFTSMGNFIGPLIAGALF), and 355–375 (IEAPIYMAIGVSLAGVVIVLI).

It belongs to the major facilitator superfamily. TCR/Tet family.

The protein localises to the cell membrane. Functionally, involved in quinolone resistance. May constitute a membrane-associated active efflux pump of hydrophilic quinolones. The chain is Quinolone resistance protein NorA (norA) from Staphylococcus aureus (strain Mu50 / ATCC 700699).